Here is a 374-residue protein sequence, read N- to C-terminus: Pectate lyase 3 (374 aa).

The signal sequence occupies residues 1–22; that stretch reads MKYLLPSTAAGLLLLAAQPTMA. A disulfide bridge links cysteine 93 with cysteine 176. Positions 150, 152, 187, and 191 each coordinate Ca(2+). Residue arginine 239 is part of the active site. A disulfide bond links cysteine 350 and cysteine 373.

It belongs to the polysaccharide lyase 1 family. PLADES subfamily. It depends on Ca(2+) as a cofactor.

It localises to the secreted. The enzyme catalyses Eliminative cleavage of (1-&gt;4)-alpha-D-galacturonan to give oligosaccharides with 4-deoxy-alpha-D-galact-4-enuronosyl groups at their non-reducing ends.. Its pathway is glycan metabolism; pectin degradation; 2-dehydro-3-deoxy-D-gluconate from pectin: step 2/5. Functionally, involved in maceration and soft-rotting of plant tissue. The sequence is that of Pectate lyase 3 (pel3) from Pectobacterium atrosepticum (strain SCRI 1043 / ATCC BAA-672) (Erwinia carotovora subsp. atroseptica).